Reading from the N-terminus, the 156-residue chain is tRNA (cytidine(34)-2'-O)-methyltransferase (156 aa).

S-adenosyl-L-methionine-binding residues include Gly-102, Leu-124, and Ser-132.

This sequence belongs to the class IV-like SAM-binding methyltransferase superfamily. RNA methyltransferase TrmH family. TrmL subfamily. Homodimer.

Its subcellular location is the cytoplasm. The catalysed reaction is cytidine(34) in tRNA + S-adenosyl-L-methionine = 2'-O-methylcytidine(34) in tRNA + S-adenosyl-L-homocysteine + H(+). It catalyses the reaction 5-carboxymethylaminomethyluridine(34) in tRNA(Leu) + S-adenosyl-L-methionine = 5-carboxymethylaminomethyl-2'-O-methyluridine(34) in tRNA(Leu) + S-adenosyl-L-homocysteine + H(+). In terms of biological role, methylates the ribose at the nucleotide 34 wobble position in the two leucyl isoacceptors tRNA(Leu)(CmAA) and tRNA(Leu)(cmnm5UmAA). Catalyzes the methyl transfer from S-adenosyl-L-methionine to the 2'-OH of the wobble nucleotide. This is tRNA (cytidine(34)-2'-O)-methyltransferase from Burkholderia pseudomallei (strain 1106a).